A 355-amino-acid chain; its full sequence is 6-aminohexanoate-oligomer endohydrolase (355 aa).

The Nucleophile role is filled by threonine 267.

The protein belongs to the peptidase S58 family. In terms of assembly, heterotetramer composed of 4 alpha/beta heterodimers. In terms of processing, expressed as an inactive precursor that is cleaved autocatalytically at Asn266/Thr267 to generate an active enzyme composed of an alpha subunit and a beta subunit.

It carries out the reaction [N-(6-aminohexanoyl)]n + H2O = [N-(6-aminohexanoyl)]n-x + [N-(6-aminohexanoyl)]x.. It functions in the pathway xenobiotic degradation; nylon-6 oligomer degradation. Involved in the degradation of nylon-6 oligomers. Degrades cyclic and linear oligomers of 6-aminohexanoate (Ahx) with a degree of polymerization greater than three by an endo-type mode. Cannot use Ahx cyclic dimer or the Ahx linear dimer. In Agromyces sp. (strain KY5R), this protein is 6-aminohexanoate-oligomer endohydrolase.